A 554-amino-acid polypeptide reads, in one-letter code: Condensin-2 complex subunit H2 (554 aa).

Residues Ser-45, Ser-178, Ser-182, Ser-199, and Ser-200 each carry the phosphoserine modification. A disordered region spans residues 154 to 296; sequence PVDVHPMPRS…GQKRKRKGAT (143 aa). A compositionally biased stretch (polar residues) spans 179-191; sequence RNGSPVSVRSISQ. Acidic residues predominate over residues 201-210; the sequence is GDEDAEDVAE. Phosphoserine is present on Ser-441.

Belongs to the CND2 H2 (condensin-2 subunit 2) family. Component of the condensin-2 complex, which contains the SMC2 and SMC4 heterodimer, and three non SMC subunits, NCAPG2, NCAPH2 and NCAPD3 that probably regulate the complex.

The protein localises to the nucleus. Regulatory subunit of the condensin-2 complex, a complex that seems to provide chromosomes with an additional level of organization and rigidity and in establishing mitotic chromosome architecture. May promote the resolution of double-strand DNA catenanes (intertwines) between sister chromatids. Condensin-mediated compaction likely increases tension in catenated sister chromatids, providing directionality for type II topoisomerase-mediated strand exchanges toward chromatid decatenation. Required for decatenation of chromatin bridges at anaphase. Early in neurogenesis, may play an essential role to ensure accurate mitotic chromosome condensation in neuron stem cells, ultimately affecting neuron pool and cortex size. Seems to have lineage-specific role in T-cell development. This Rattus norvegicus (Rat) protein is Condensin-2 complex subunit H2 (Ncaph2).